A 380-amino-acid polypeptide reads, in one-letter code: Cytochrome b (380 aa).

A run of 4 helical transmembrane segments spans residues 34–54 (FGSL…LLAM), 78–99 (WLIR…YLHI), 114–134 (WNTG…GYVL), and 179–199 (FFAL…IHLT). Heme b contacts are provided by His84 and His98. His183 and His197 together coordinate heme b. His202 is an a ubiquinone binding site. Transmembrane regions (helical) follow at residues 227–247 (LKDI…ALFS), 289–309 (LGGV…PLLH), 321–341 (LSQL…WIGS), and 348–368 (FIII…ILFP).

It belongs to the cytochrome b family. As to quaternary structure, the cytochrome bc1 complex contains 11 subunits: 3 respiratory subunits (MT-CYB, CYC1 and UQCRFS1), 2 core proteins (UQCRC1 and UQCRC2) and 6 low-molecular weight proteins (UQCRH/QCR6, UQCRB/QCR7, UQCRQ/QCR8, UQCR10/QCR9, UQCR11/QCR10 and a cleavage product of UQCRFS1). This cytochrome bc1 complex then forms a dimer. Requires heme b as cofactor.

The protein localises to the mitochondrion inner membrane. Functionally, component of the ubiquinol-cytochrome c reductase complex (complex III or cytochrome b-c1 complex) that is part of the mitochondrial respiratory chain. The b-c1 complex mediates electron transfer from ubiquinol to cytochrome c. Contributes to the generation of a proton gradient across the mitochondrial membrane that is then used for ATP synthesis. The polypeptide is Cytochrome b (MT-CYB) (Oceanodroma microsoma (Least storm petrel)).